We begin with the raw amino-acid sequence, 438 residues long: Glutamyl-tRNA reductase (438 aa).

Substrate-binding positions include 49-52, Ser109, 114-116, and Gln120; these read TCNR and EQQ. The active-site Nucleophile is the Cys50. 191–196 is an NADP(+) binding site; that stretch reads GAGAMA.

Belongs to the glutamyl-tRNA reductase family. Homodimer.

It catalyses the reaction (S)-4-amino-5-oxopentanoate + tRNA(Glu) + NADP(+) = L-glutamyl-tRNA(Glu) + NADPH + H(+). It participates in porphyrin-containing compound metabolism; protoporphyrin-IX biosynthesis; 5-aminolevulinate from L-glutamyl-tRNA(Glu): step 1/2. Its function is as follows. Catalyzes the NADPH-dependent reduction of glutamyl-tRNA(Glu) to glutamate 1-semialdehyde (GSA). The protein is Glutamyl-tRNA reductase of Corynebacterium diphtheriae (strain ATCC 700971 / NCTC 13129 / Biotype gravis).